Consider the following 244-residue polypeptide: Carboxy-S-adenosyl-L-methionine synthase (244 aa).

Residues tyrosine 38, 63-65, 88-89, 116-117, asparagine 131, and arginine 198 each bind S-adenosyl-L-methionine; these read GCS, DN, and DI.

It belongs to the class I-like SAM-binding methyltransferase superfamily. Cx-SAM synthase family. In terms of assembly, homodimer.

The catalysed reaction is prephenate + S-adenosyl-L-methionine = carboxy-S-adenosyl-L-methionine + 3-phenylpyruvate + H2O. Its function is as follows. Catalyzes the conversion of S-adenosyl-L-methionine (SAM) to carboxy-S-adenosyl-L-methionine (Cx-SAM). This chain is Carboxy-S-adenosyl-L-methionine synthase, found in Haemophilus ducreyi (strain 35000HP / ATCC 700724).